We begin with the raw amino-acid sequence, 310 residues long: Atrochrysone carboxyl ACP thioesterase CPUR_05436 (310 aa).

Residues His-105, His-107, Asp-109, and His-110 each coordinate Zn(2+). The active-site Proton donor/acceptor is Asp-109.

The protein belongs to the metallo-beta-lactamase superfamily. Zn(2+) is required as a cofactor.

It catalyses the reaction atrochrysone carboxyl-[ACP] + H2O = atrochrysone carboxylate + holo-[ACP] + H(+). It participates in pigment biosynthesis. Functionally, atrochrysone carboxyl ACP thioesterase; part of the ergochrome gene cluster responsible for the typical purple-black color of the ergot sclerotia. The ergochrome gene cluster produces several ergot pigments including the yellow ergochrome secalonic acid and its derivatives, as well as the red anthraquinones endocrocin and clavorubin. The pathway begins with the synthesis of atrochrysone thioester by the polyketide synthase (PKS) CPUR_05437. The atrochrysone carboxyl ACP thioesterase CPUR_05436 then breaks the thioester bond and releases the atrochrysone carboxylic acid from CPUR_05437. The atrochrysone carboxylic acid is then converted to atrochrysone which is further transformed into emodin anthrone. The next step is performed by the anthrone oxygenase CPUR_05434 that catalyzes the oxidation of emodinanthrone to emodin. Emodin is further modified to yield monodictyphenone via several steps involving CPUR_05427, CPUR_05428, CPUR_05429 and CPUR_05430. The short chain dehydrogenase/reductase CPUR_05418 then catalyzes the C-5 ketoreduction to give the xanthone skeleton of the monomeric units. Ergochromes formation requires further dimerization steps of different xanthone units, probably catalyzed by the cytochrome P450 monooxygenase CPUR_05419. CPUR_05425, CPUR_05426 and CPUR_05431 are unique to Claviceps, thus it is likely that they are involved in further modification of xanthone units or in their dimerization. The yellow ergochromes and the red anthraquinone pigments endocrocin and clavorubin are products from the same PKS derived precursors and the latter are likely shunt products in the pathway of xanthone biosynthesis. It is proposed that atrochrysone carboxylic acid released from the PKS CPUR_05437 can also be converted to endocrocin anthrone which is further oxidized into endocrocin by CPUR_05435. Endocrocin could be then modified to clavorubin, possibly by CPUR_05423 and CPUR_05431. Clavorubin is the principal anthraquinone metabolite produced by the cluster with a much higher yield compared to endocrocin. The polypeptide is Atrochrysone carboxyl ACP thioesterase CPUR_05436 (Claviceps purpurea (strain 20.1) (Ergot fungus)).